Reading from the N-terminus, the 788-residue chain is Endonuclease MutS2 (788 aa).

Residue 332-339 (GPNTGGKT) participates in ATP binding. In terms of domain architecture, Smr spans 713–788 (VDLRGMDAEE…GTGVTVVELK (76 aa)).

Belongs to the DNA mismatch repair MutS family. MutS2 subfamily. Homodimer. Binds to stalled ribosomes, contacting rRNA.

Its function is as follows. Endonuclease that is involved in the suppression of homologous recombination and thus may have a key role in the control of bacterial genetic diversity. Acts as a ribosome collision sensor, splitting the ribosome into its 2 subunits. Detects stalled/collided 70S ribosomes which it binds and splits by an ATP-hydrolysis driven conformational change. Acts upstream of the ribosome quality control system (RQC), a ribosome-associated complex that mediates the extraction of incompletely synthesized nascent chains from stalled ribosomes and their subsequent degradation. Probably generates substrates for RQC. The protein is Endonuclease MutS2 of Clostridium botulinum (strain ATCC 19397 / Type A).